The chain runs to 72 residues: MSKEDMIEFSGTVTELLPNAMFRVKLDNEHMILAHTSGKMRKNRIRVLAGDRVNVEMTPYDLSKGRITFRFK.

An S1-like domain is found at 1–72 (MSKEDMIEFS…SKGRITFRFK (72 aa)).

Belongs to the IF-1 family. Component of the 30S ribosomal translation pre-initiation complex which assembles on the 30S ribosome in the order IF-2 and IF-3, IF-1 and N-formylmethionyl-tRNA(fMet); mRNA recruitment can occur at any time during PIC assembly.

It localises to the cytoplasm. In terms of biological role, one of the essential components for the initiation of protein synthesis. Stabilizes the binding of IF-2 and IF-3 on the 30S subunit to which N-formylmethionyl-tRNA(fMet) subsequently binds. Helps modulate mRNA selection, yielding the 30S pre-initiation complex (PIC). Upon addition of the 50S ribosomal subunit IF-1, IF-2 and IF-3 are released leaving the mature 70S translation initiation complex. The sequence is that of Translation initiation factor IF-1 from Gluconacetobacter diazotrophicus (strain ATCC 49037 / DSM 5601 / CCUG 37298 / CIP 103539 / LMG 7603 / PAl5).